Consider the following 621-residue polypeptide: Polycystin-2-like protein 2 (621 aa).

Residues 1-31 are Cytoplasmic-facing; it reads MSEATWWYRGGTSKHDLHYRREAEVNTTLEE. Residues 32–52 traverse the membrane as a helical segment; sequence LLLYFIFLINLCILTFGMVNP. Residues 53–277 lie on the Extracellular side of the membrane; that stretch reads HMYYLNKVMS…SVKLLRYVSY (225 aa). Residues Asn-115 and Asn-138 are each glycosylated (N-linked (GlcNAc...) asparagine). A helical membrane pass occupies residues 278–298; the sequence is YDYFIASCEVIFCIFLFVFII. The Cytoplasmic segment spans residues 299-314; the sequence is QELRKVNEFKSAYFRS. Residues 315–335 form a helical membrane-spanning segment; that stretch reads VWNWLEMLLLLLCFLAVSFYA. Residues 336–360 are Extracellular-facing; sequence YCNMQSFLLLGQLLKNTDSYPDFYF. A helical transmembrane segment spans residues 361–381; sequence LAYWHIYYNNVIAITIFFAWI. Topologically, residues 382 to 406 are cytoplasmic; it reads KIFKFISFNETMSQLSSTLSRCMKD. A helical membrane pass occupies residues 407–427; it reads IVGFAIMFFIIFSAYAQLGFL. The Extracellular segment spans residues 428–468; sequence VFGSQVDDFSTFQNSIFAQFRIVLGDFNFAGIQQANWILGP. The chain crosses the membrane as a helical span at residues 469–489; it reads IYFITFIFFVFFVLLNMFLAI. The Cytoplasmic portion of the chain corresponds to 490–621; the sequence is INDTYSEVKA…KLNQLMRKLH (132 aa). Positions 521–551 form a coiled coil; the sequence is NVLEKLRLKKAQAKEEKKMQTTDLAQRARRD.

The protein belongs to the polycystin family. As to quaternary structure, interacts with TRPC1 and TRPC5. As to expression, expressed only in testis and heart.

It localises to the membrane. In terms of biological role, exhibits a lower single conductance but no spontaneous channel activity. May function as a regulator of calcium channels or a channel component involving Ca2(+) homeostasis. This chain is Polycystin-2-like protein 2, found in Mus musculus (Mouse).